We begin with the raw amino-acid sequence, 119 residues long: Basic phospholipase A2 (119 aa).

7 cysteine pairs are disulfide-bonded: Cys11–Cys72, Cys27–Cys118, Cys29–Cys45, Cys44–Cys100, Cys51–Cys93, Cys61–Cys86, and Cys79–Cys91. Residues Tyr28, Gly30, and Gly32 each contribute to the Ca(2+) site. His48 is a catalytic residue. A Ca(2+)-binding site is contributed by Asp49. An N-linked (GlcNAc...) asparagine glycan is attached at Asn82. Residue Asp94 is part of the active site.

It belongs to the phospholipase A2 family. Group I subfamily. D49 sub-subfamily. The cofactor is Ca(2+). Expressed by the venom gland.

It localises to the secreted. The catalysed reaction is a 1,2-diacyl-sn-glycero-3-phosphocholine + H2O = a 1-acyl-sn-glycero-3-phosphocholine + a fatty acid + H(+). In terms of biological role, snake venom phospholipase A2 (PLA2) that shows weak myotoxicity and induces edema in mice. Shows no cytotoxicity in vitro. Has an anticoagulant effect in vitro. PLA2 catalyzes the calcium-dependent hydrolysis of the 2-acyl groups in 3-sn-phosphoglycerides. The protein is Basic phospholipase A2 of Micrurus mipartitus (Red-tailed coral snake).